Here is a 168-residue protein sequence, read N- to C-terminus: MAAVTSAAVSIPSFTGLKAASASNAKVSASAKVSASPLPRLSIKASLKEVGAAVVATAASAMIASNAMAVDVLLGADDGSLAFVPSEFSVPAGEKIVFKNNAGFPHNVLFDEDAVPSGVDVSKISMSEEDLLNAKGETFEVALSDKGEYTFYCSPHQGAGMVGKVIVN.

The transit peptide at 1 to 69 directs the protein to the chloroplast; sequence MAAVTSAAVS…SAMIASNAMA (69 aa). The region spanning 70 to 168 is the Plastocyanin-like domain; the sequence is VDVLLGADDG…AGMVGKVIVN (99 aa). The Cu cation site is built by H106, C153, H156, and M161.

The protein belongs to the plastocyanin family. Requires Cu(2+) as cofactor.

The protein resides in the plastid. Its subcellular location is the chloroplast thylakoid membrane. Functionally, participates in electron transfer between P700 and the cytochrome b6-f complex in photosystem I. In Populus nigra (Lombardy poplar), this protein is Plastocyanin B, chloroplastic (PETE).